The sequence spans 268 residues: Mitochondrial distribution and morphology protein 12 (268 aa).

One can recognise an SMP-LTD domain in the interval 1–256 (MSFEINWQDL…WPSWINLDFN (256 aa)). The tract at residues 75-94 (LPKDKIPEESDSGCQSADGE) is disordered.

Belongs to the MDM12 family. As to quaternary structure, component of the ER-mitochondria encounter structure (ERMES) or MDM complex, composed of MMM1, MDM10, MDM12 and MDM34. An MMM1 homodimer associates with one molecule of MDM12 on each side in a pairwise head-to-tail manner, and the SMP-LTD domains of MMM1 and MDM12 generate a continuous hydrophobic tunnel for phospholipid trafficking.

The protein resides in the mitochondrion outer membrane. It localises to the endoplasmic reticulum membrane. Functionally, component of the ERMES/MDM complex, which serves as a molecular tether to connect the endoplasmic reticulum (ER) and mitochondria. Components of this complex are involved in the control of mitochondrial shape and protein biogenesis, and function in nonvesicular lipid trafficking between the ER and mitochondria. MDM12 is required for the interaction of the ER-resident membrane protein MMM1 and the outer mitochondrial membrane-resident beta-barrel protein MDM10. The MDM12-MMM1 subcomplex functions in the major beta-barrel assembly pathway that is responsible for biogenesis of all mitochondrial outer membrane beta-barrel proteins, and acts in a late step after the SAM complex. The MDM10-MDM12-MMM1 subcomplex further acts in the TOM40-specific pathway after the action of the MDM12-MMM1 complex. Essential for establishing and maintaining the structure of mitochondria and maintenance of mtDNA nucleoids. The sequence is that of Mitochondrial distribution and morphology protein 12 from Lachancea thermotolerans (strain ATCC 56472 / CBS 6340 / NRRL Y-8284) (Yeast).